The following is a 657-amino-acid chain: Glycogen debranching enzyme (657 aa).

Aspartate 336 acts as the Nucleophile in catalysis. The Proton donor role is filled by glutamate 371. The segment covering 458–467 (NEANGEENRD) has biased composition (basic and acidic residues). Residues 458–479 (NEANGEENRDGTNNNYSNNHGK) are disordered.

Belongs to the glycosyl hydrolase 13 family.

The catalysed reaction is Hydrolysis of (1-&gt;6)-alpha-D-glucosidic linkages to branches with degrees of polymerization of three or four glucose residues in limit dextrin.. Its pathway is glycan degradation; glycogen degradation. Functionally, removes maltotriose and maltotetraose chains that are attached by 1,6-alpha-linkage to the limit dextrin main chain, generating a debranched limit dextrin. In Escherichia coli (strain K12 / DH10B), this protein is Glycogen debranching enzyme.